Reading from the N-terminus, the 75-residue chain is Protein SlyX homolog (75 aa).

The segment at 56–75 is disordered; it reads KNMDSSNMEDPANEPPPPHY.

This sequence belongs to the SlyX family.

The polypeptide is Protein SlyX homolog (Vibrio parahaemolyticus serotype O3:K6 (strain RIMD 2210633)).